Here is a 1042-residue protein sequence, read N- to C-terminus: Isoleucine--tRNA ligase (1042 aa).

A 'HIGH' region motif is present at residues 48–58 (PFATGLPHFGH). The 'KMSKS' region signature appears at 594 to 598 (KMSKS). Lys-597 serves as a coordination point for ATP.

Belongs to the class-I aminoacyl-tRNA synthetase family. IleS type 2 subfamily. Monomer. Requires Zn(2+) as cofactor.

It is found in the cytoplasm. The catalysed reaction is tRNA(Ile) + L-isoleucine + ATP = L-isoleucyl-tRNA(Ile) + AMP + diphosphate. Catalyzes the attachment of isoleucine to tRNA(Ile). As IleRS can inadvertently accommodate and process structurally similar amino acids such as valine, to avoid such errors it has two additional distinct tRNA(Ile)-dependent editing activities. One activity is designated as 'pretransfer' editing and involves the hydrolysis of activated Val-AMP. The other activity is designated 'posttransfer' editing and involves deacylation of mischarged Val-tRNA(Ile). This is Isoleucine--tRNA ligase from Borreliella afzelii (strain PKo) (Borrelia afzelii).